Here is a 626-residue protein sequence, read N- to C-terminus: Beta-galactosidase large subunit (626 aa).

The Proton donor role is filled by Glu466. The active-site Nucleophile is the Glu534.

The protein belongs to the glycosyl hydrolase 2 family. As to quaternary structure, heterodimer of a large (LacL) and a small subunit (LacM).

The enzyme catalyses Hydrolysis of terminal non-reducing beta-D-galactose residues in beta-D-galactosides.. Its function is as follows. Component of a beta-galactosidase that displays activity with the artificial chromogenic substrate o-nitrophenyl-beta-D-galactopyranoside (ONPG). The chain is Beta-galactosidase large subunit from Leuconostoc lactis.